Consider the following 359-residue polypeptide: Phosphate acyltransferase (359 aa).

Positions 335–359 (SGAGGAATGSPETDAPNPHPDSRAA) are disordered.

The protein belongs to the PlsX family. Homodimer. Probably interacts with PlsY.

Its subcellular location is the cytoplasm. It carries out the reaction a fatty acyl-[ACP] + phosphate = an acyl phosphate + holo-[ACP]. Its pathway is lipid metabolism; phospholipid metabolism. Its function is as follows. Catalyzes the reversible formation of acyl-phosphate (acyl-PO(4)) from acyl-[acyl-carrier-protein] (acyl-ACP). This enzyme utilizes acyl-ACP as fatty acyl donor, but not acyl-CoA. The polypeptide is Phosphate acyltransferase (Cupriavidus metallidurans (strain ATCC 43123 / DSM 2839 / NBRC 102507 / CH34) (Ralstonia metallidurans)).